A 227-amino-acid polypeptide reads, in one-letter code: Probable septum site-determining protein MinC (227 aa).

This sequence belongs to the MinC family. As to quaternary structure, interacts with MinD and FtsZ.

In terms of biological role, cell division inhibitor that blocks the formation of polar Z ring septums. Rapidly oscillates between the poles of the cell to destabilize FtsZ filaments that have formed before they mature into polar Z rings. Prevents FtsZ polymerization. The protein is Probable septum site-determining protein MinC of Acetivibrio thermocellus (strain ATCC 27405 / DSM 1237 / JCM 9322 / NBRC 103400 / NCIMB 10682 / NRRL B-4536 / VPI 7372) (Clostridium thermocellum).